Here is a 535-residue protein sequence, read N- to C-terminus: Isoleucine N-monooxygenase 1 (535 aa).

Over 1–8 (MGLMPDFL) the chain is Cytoplasmic. The chain crosses the membrane as a helical; Signal-anchor for type II membrane protein span at residues 9–29 (SLCHEFPWTFLLVVIFSFMIF). The Lumenal segment spans residues 30-535 (KVTKTHLVNK…AAELYRTNEI (506 aa)). Asn38, Asn232, and Asn404 each carry an N-linked (GlcNAc...) asparagine glycan. Cys470 is a heme binding site.

It belongs to the cytochrome P450 family. Heme serves as cofactor. As to expression, exclusively expressed in aerial parts. Highest expression in the apical leaves. Also detected in the second leaf from the top and in the stem. Not expressed in older leaves or roots.

It localises to the microsome membrane. The catalysed reaction is L-isoleucine + 2 reduced [NADPH--hemoprotein reductase] + 2 O2 = (1E,2S)-2-methylbutanal oxime + 2 oxidized [NADPH--hemoprotein reductase] + CO2 + 3 H2O + 2 H(+). The enzyme catalyses L-isoleucine + reduced [NADPH--hemoprotein reductase] + O2 = N-hydroxy-L-isoleucine + oxidized [NADPH--hemoprotein reductase] + H2O + 2 H(+). It catalyses the reaction N-hydroxy-L-isoleucine + reduced [NADPH--hemoprotein reductase] + O2 = N,N-dihydroxy-L-isoleucine + oxidized [NADPH--hemoprotein reductase] + H2O + H(+). It carries out the reaction L-valine + 2 reduced [NADPH--hemoprotein reductase] + 2 O2 = (E)-2-methylpropanal oxime + 2 oxidized [NADPH--hemoprotein reductase] + CO2 + 3 H2O + 2 H(+). The catalysed reaction is L-valine + reduced [NADPH--hemoprotein reductase] + O2 = N-hydroxy-L-valine + oxidized [NADPH--hemoprotein reductase] + H2O + 2 H(+). The enzyme catalyses N-hydroxy-L-valine + reduced [NADPH--hemoprotein reductase] + O2 = N,N-dihydroxy-L-valine + oxidized [NADPH--hemoprotein reductase] + H2O + H(+). It participates in secondary metabolite biosynthesis. Involved in the biosynthesis of the cyanogenic glucosides linamarin and lotaustralin and of the nitirle glucosides rhodiocyanoside A and D. Can use L-isoleucine &gt; L-valine as substrate, but not L-leucine, L-phenylalanine or L-tyrosine. Catalyzes multi-step reactions starting with two successive N-hydroxylations using L-isoleucine and, to a lower extent, L-valine as substrates leading to the formation of N,N-dihydroxy-L-valine and N,N-dihydroxy-L-isoleucine, respectively; following spontaneous reactions lead to the production of (E)-2-methylpropanal oxime and (1E,2S)-2-methylbutanal oxime, respectively. The chain is Isoleucine N-monooxygenase 1 from Lotus japonicus (Lotus corniculatus var. japonicus).